We begin with the raw amino-acid sequence, 425 residues long: G protein-activated inward rectifier potassium channel 2 (425 aa).

Topologically, residues 1 to 91 are cytoplasmic; it reads MTMAKLTESM…IFTTLVDLKW (91 aa). Phosphoserine occurs at positions 18 and 25. A helical membrane pass occupies residues 92–116; sequence RFNLLIFVMVYTVTWLFFGMIWWLI. At 117–140 the chain is on the extracellular side; the sequence is AYIRGDMDHIEDPSWTPCVTNLNG. Positions 141–152 form an intramembrane region, helical; Pore-forming; sequence FVSAFLFSIETE. An intramembrane region (pore-forming) is located at residues 153–159; sequence TTIGYGY. A Selectivity filter motif is present at residues 154–159; sequence TIGYGY. Residues 160-168 lie on the Extracellular side of the membrane; sequence RVITDKCPE. Residues 169-190 traverse the membrane as a helical segment; that stretch reads GIILLLIQSVLGSIVNAFMVGC. Residues 191 to 425 lie on the Cytoplasmic side of the membrane; that stretch reads MFVKISQPKK…VANLENESKV (235 aa). Residues 392–425 are disordered; it reads NQHAELETEEEEKNPEELTERNGDVANLENESKV. The PDZ-binding signature appears at 422–425; the sequence is ESKV.

This sequence belongs to the inward rectifier-type potassium channel (TC 1.A.2.1) family. KCNJ6 subfamily. As to quaternary structure, associates with KCNJ3/GIRK1to form a G-protein-activated heteromultimer pore-forming unit. Associates with KCNJ5/GRIK4 to form a G-protein-activated heteromultimer pore-forming unit. The resulting inward current is much larger. Interacts (via PDZ-binding motif) with SNX27 (via PDZ domain); the interaction is required when endocytosed to prevent degradation in lysosomes and promote recycling to the plasma membrane. Associates with KCNJ3/GRIK1 to form a G-protein-activated heteromultimer pore-forming unit. In terms of assembly, associates with KCNJ3/GRIK1 to form a G-protein-activated heteromultimer pore-forming unit. The resulting inward current is much larger. In terms of tissue distribution, expressed in the brain.

It localises to the membrane. The enzyme catalyses K(+)(in) = K(+)(out). With respect to regulation, activated by phosphatidylinositol 4,5 biphosphate (PtdIns(4,5)P2). In terms of biological role, inward rectifier potassium channels are characterized by a greater tendency to allow potassium to flow into the cell rather than out of it. Their voltage dependence is regulated by the concentration of extracellular potassium; as external potassium is raised, the voltage range of the channel opening shifts to more positive voltages. The inward rectification is mainly due to the blockage of outward current by internal magnesium. This potassium channel is controlled by G proteins. Forms a functional channel in association with KCNJ3/GIRK1. Its function is as follows. Inward rectifier potassium channels are characterized by a greater tendency to allow potassium to flow into the cell rather than out of it. Their voltage dependence is regulated by the concentration of extracellular potassium; as external potassium is raised, the voltage range of the channel opening shifts to more positive voltages. The inward rectification is mainly due to the blockage of outward current by internal magnesium. This potassium channel is controlled by G proteins. This Mus musculus (Mouse) protein is G protein-activated inward rectifier potassium channel 2 (Kcnj6).